We begin with the raw amino-acid sequence, 398 residues long: MKLKLLNMILSMMNKTNNNNNIIINNTLDSLMNKKLLLKNMLLDMNNKKMNNMKRMLNNNNMNPAGANPVVHRIGPAGNINNKLQHLNNMNNWNTQIYNYNKNMEIMNTMNDKLINKLLYKMMTLKLNNMNINKIIMSKTINQHSLNKLNIKFYYYNNDINNNNNNNNNNYYMNMMNKLMNIMNNNMNNNLCNILSYYYKKKVTIEPIKLSYIYLNSDIFSKYISLNDMDKYNNGILTNYQRMLNNIMPKLNDHNISMNYINNINNINNNKYNNMINLLNNNNNINNNNNYNNNNNNYIGNINNIYNNMTIDNIPMDILMYKYLVGWSIKFKGRLSNNNGRTSTTNLLNGTFNNKKYLWSNINNNYKLNYIPSNHNLYNNSNINKNGKYNIKVKLNFI.

This sequence belongs to the universal ribosomal protein uS3 family. Component of the mitochondrial small ribosomal subunit (mt-SSU). Mature yeast 74S mitochondrial ribosomes consist of a small (37S) and a large (54S) subunit. The 37S small subunit contains a 15S ribosomal RNA (15S mt-rRNA) and 34 different proteins. The 54S large subunit contains a 21S rRNA (21S mt-rRNA) and 46 different proteins. uS3m, uS4m and uS5m form the narrow entry site of the mRNA channel.

The protein localises to the mitochondrion. Its function is as follows. Component of the mitochondrial ribosome (mitoribosome), a dedicated translation machinery responsible for the synthesis of mitochondrial genome-encoded proteins, including at least some of the essential transmembrane subunits of the mitochondrial respiratory chain. The mitoribosomes are attached to the mitochondrial inner membrane and translation products are cotranslationally integrated into the membrane. uS3m is essential for mitochondrial protein synthesis and required for the maturation of small ribosomal subunits. In Saccharomyces cerevisiae (strain ATCC 204508 / S288c) (Baker's yeast), this protein is Small ribosomal subunit protein uS3m (VAR1).